We begin with the raw amino-acid sequence, 173 residues long: Large ribosomal subunit protein uL10 (173 aa).

Belongs to the universal ribosomal protein uL10 family. Part of the ribosomal stalk of the 50S ribosomal subunit. The N-terminus interacts with L11 and the large rRNA to form the base of the stalk. The C-terminus forms an elongated spine to which L12 dimers bind in a sequential fashion forming a multimeric L10(L12)X complex.

Functionally, forms part of the ribosomal stalk, playing a central role in the interaction of the ribosome with GTP-bound translation factors. This Chlorobium phaeobacteroides (strain BS1) protein is Large ribosomal subunit protein uL10.